Here is a 198-residue protein sequence, read N- to C-terminus: Autophagy-related protein 33 (198 aa).

3 helical membrane passes run 17-37 (VSLG…LPAL), 60-80 (PVLA…FLAP), and 86-106 (PYLL…ILIP). Positions 111 to 147 (APRRTASSAPRKSSRAKMEASYEVLGDAHSEPASDED) are disordered. The span at 112 to 121 (PRRTASSAPR) shows a compositional bias: low complexity. Positions 126–142 (AKMEASYEVLGDAHSEP) are enriched in basic and acidic residues. A helical transmembrane segment spans residues 171–191 (TAISALGFAMAVVGIWGDGAP).

Belongs to the ATG33 family.

It is found in the mitochondrion membrane. Involved in the selective degradation of mitochondria via autophagy during starvation and at post-log phase. Autophagy is required for proper vegetative growth, asexual/sexual reproduction, and full virulence. Autophagy is particularly involved in the biosynthesis of deoxynivalenol (DON), an important virulence determinant. This is Autophagy-related protein 33 from Gibberella zeae (strain ATCC MYA-4620 / CBS 123657 / FGSC 9075 / NRRL 31084 / PH-1) (Wheat head blight fungus).